A 734-amino-acid chain; its full sequence is Putative protocadherin beta-18 (734 aa).

Cadherin domains follow at residues 1–79 (MWKT…TPTF), 80–188 (LNNH…APEF), 189–293 (EKPV…PPEI), 294–398 (AMTS…APIF), and 399–508 (TQTS…SPFV). An N-linked (GlcNAc...) asparagine glycan is attached at asparagine 115. N-linked (GlcNAc...) asparagine glycans are attached at residues asparagine 365 and asparagine 383. Asparagine 514 is a glycosylation site (N-linked (GlcNAc...) asparagine). The 107-residue stretch at 515–621 (GSAPCTELVP…GFSQPYLPLT (107 aa)) folds into the Cadherin 6 domain. A helical transmembrane segment spans residues 638-658 (VVALASVSSLFLFSVFLFVAV).

Its subcellular location is the cell membrane. Functionally, potential calcium-dependent cell-adhesion protein. The sequence is that of Putative protocadherin beta-18 (PCDHB18P) from Homo sapiens (Human).